The chain runs to 161 residues: tRNA-specific adenosine deaminase (161 aa).

One can recognise a CMP/dCMP-type deaminase domain in the interval 2-120 (TQDELYMKEA…GTLMNLLQEE (119 aa)). His-53 provides a ligand contact to Zn(2+). The Proton donor role is filled by Glu-55. Positions 83 and 86 each coordinate Zn(2+).

Belongs to the cytidine and deoxycytidylate deaminase family. Homodimer. Zn(2+) serves as cofactor.

The catalysed reaction is adenosine(34) in tRNA + H2O + H(+) = inosine(34) in tRNA + NH4(+). In terms of biological role, catalyzes the deamination of adenosine to inosine at the wobble position 34 of tRNA(Arg2). This chain is tRNA-specific adenosine deaminase, found in Bacillus subtilis (strain 168).